A 222-amino-acid chain; its full sequence is Guanylate kinase (222 aa).

The region spanning 19–197 (GFLFILSSPS…SVSLIKSIYL (179 aa)) is the Guanylate kinase-like domain. Residue 26-33 (SPSGAGKS) coordinates ATP.

This sequence belongs to the guanylate kinase family.

Its subcellular location is the cytoplasm. The catalysed reaction is GMP + ATP = GDP + ADP. In terms of biological role, essential for recycling GMP and indirectly, cGMP. This is Guanylate kinase from Bartonella henselae (strain ATCC 49882 / DSM 28221 / CCUG 30454 / Houston 1) (Rochalimaea henselae).